A 1093-amino-acid chain; its full sequence is Phosphorylase b kinase regulatory subunit beta (1093 aa).

A2 carries the N-acetylalanine modification. A Phosphoserine modification is found at A4. The interval 7-29 (LTAEVSWKVLERRARTKRSGSVY) is calmodulin-binding. Position 12 is a phosphoserine; by autocatalysis (S12). A phosphoserine mark is found at S27 and S701. The tract at residues 689–716 (EPPKHSKVKRQSSTPSAPELGQQPDVNI) is disordered. 2 calmodulin-binding regions span residues 768 to 795 (RVYRRAGSQKLWLAVRYGAAFTQKFSSS) and 920 to 951 (NGRCWLNRRQIDGSLNRTPTGFYDRVWQILER). A lipid anchor (S-farnesyl cysteine) is attached at C1090.

Belongs to the phosphorylase b kinase regulatory chain family. In terms of assembly, hexadecamer of 4 heterotetramers, each composed of alpha, beta, gamma, and delta subunits. Alpha (PHKA1 or PHKA2) and beta (PHKB) are regulatory subunits, gamma (PHKG1 or PHKG2) is the catalytic subunit, and delta is calmodulin. In terms of processing, ser-701 is probably phosphorylated by PKA. Post-translationally, although the final Cys may be farnesylated, the terminal tripeptide is probably not removed, and the C-terminus is not methylated.

The protein resides in the cell membrane. The protein operates within glycan biosynthesis; glycogen metabolism. With respect to regulation, by phosphorylation of various serine residues. In terms of biological role, phosphorylase b kinase catalyzes the phosphorylation of serine in certain substrates, including troponin I. The beta chain acts as a regulatory unit and modulates the activity of the holoenzyme in response to phosphorylation. The polypeptide is Phosphorylase b kinase regulatory subunit beta (PHKB) (Homo sapiens (Human)).